Reading from the N-terminus, the 1584-residue chain is MSKQVSLPEMIKDWTKEHVKKWVNEDLKINEQYGQILLSEEVTGLVLQELTEKDLVEMGLPWGPALLIKRSYNKLNSKSPESDNHDPGQLDNSKPSKTEHQKNPKHTKKEEENSMSSNIDYDPREIRDIKQEESILMKENVLDEVANAKHKKKGKLKPEQLTCMPYPFDQFHDSHRYIEHYTLQPETGALNLIDPIHEFKALTNTETATEVDIKMKFSNEVFRFASACMNSRTNGTIHFGVKDKPHGEIVGVKITSKAAFIDHFNVMIKKYFEESEINEAKKCIREPRFVEVLLQNNTPSDRFVIEVDTIPKHSICNDKYFYIQMQICKDKIWKQNQNLSLFVREGASSRDILANSKQRDVDFKAFLQNLKSLVASRKEAEEEYGMKAMKKESEGLKLVKLLIGNRDSLDNSYYDWYILVTNKCHPNQIKHLDFLKEIKWFAVLEFDPESMINGVVKAYKESRVANLHFPNQYEDKTTNMWEKISTLNLYQQPSWIFCNGRSDLKSETYKPLEPHLWQRERASEVRKLILFLTDENIMTRGKFLVVFLLLSSVESPGDPLIETFWAFYQALKGMENMLCISVNSHIYQRWKDLLQTRMKMEDELTNHSISTLNIELVNSTILKLKSVTRSSRRFLPARGSSSVILEKKKEDVLTALEILCENECTETDIEKDKSKFLEFKKSKEEHFYRGGKVSWWNFYFSSENYSSDFVKRDSYEKLKDLIHCWAESPKPIFAKIINLYHHPGCGGTTLAMHVLWDLKKNFRCAVLKNKTTDFAEIAEQVINLVTYRAKSHQDYIPVLLLVDDFEEQENVYFLQNAIHSVLAEKDLRYEKTLVIILNCMRSRNPDESAKLADSIALNYQLSSKEQRAFGAKLKEIEKQHKNCENFYSFMIMKSNFDETYIENVVRNILKGQDVDSKEAQLISFLALLSSYVTDSTISVSQCEIFLGIIYTSTPWEPESLEDKMGTYSTLLIKTEVAEYGRYTGVRIIHPLIALYCLKELERSYHLDKCQIALNILEENLFYDSGIGRDKFQHDVQTLLLTRQRKVYGDETDTLFSPLMEALQNKDIEKVLSAGSRRFPQNAFICQALARHFYIKEKDFNTALDWARQAKMKAPKNSYISDTLGQVYKSEIKWWLDGNKNCRSITVNDLTHLLEAAEKASRAFKESQRQTDSKNYETENWSPQKSQRRYDMYNTACFLGEIEVGLYTIQILQLTPFFHKENELSKKHMVQFLSGKWTIPPDPRNECYLALSKFTSHLKNLQSDLKRCFDFFIDYMVLLKMRYTQKEIAEIMLSKKVSRCFRKYTELFCHLDPCLLQSKESQLLQEENCRKKLEALRADRFAGLLEYLNPNYKDATTMESIVNEYAFLLQQNSKKPMTNEKQNSILANIILSCLKPNSKLIQPLTTLKKQLREVLQFVGLSHQYPGPYFLACLLFWPENQELDQDSKLIEKYVSSLNRSFRGQYKRMCRSKQASTLFYLGKRKGLNSIVHKAKIEQYFDKAQNTNSLWHSGDVWKKNEVKDLLRRLTGQAEGKLISVEYGTEEKIKIPVISVYSGPLRSGRNIERVSFYLGFSIEGPLAYDIEVI.

One can recognise an SAM domain in the interval 14–79 (WTKEHVKKWV…RSYNKLNSKS (66 aa)). Residues 76–122 (NSKSPESDNHDPGQLDNSKPSKTEHQKNPKHTKKEEENSMSSNIDYD) form a disordered region. Basic and acidic residues predominate over residues 80 to 112 (PESDNHDPGQLDNSKPSKTEHQKNPKHTKKEEE).

Interacts with EEA1. As to expression, widely expressed in adult and fetal tissues. Expressed in the cerebellum. Variable expression in tumors. Down-regulated in breast cancer.

The protein resides in the early endosome. Its subcellular location is the mitochondrion. Its function is as follows. May be involved in endosome fusion. Mediates down-regulation of growth factor signaling via internalization of growth factor receptors. The sequence is that of Sterile alpha motif domain-containing protein 9-like (SAMD9L) from Homo sapiens (Human).